The chain runs to 437 residues: MPLQWFLKYRPKSLQEVENQDEVKEELKKWIESWLNGEPTAKAVLLYGPPGVGKTTLAEALARDYKLELLEMNASDSRNLRDIKDVAERASISGSLFGIKGKIILLDEIDGIYSRADAGAIPAILELIEKTKYPVILTANDPWDPSLRSLRNAVKMIELKRLGKYPLKRLLKRICEKEKIVCIDEALDHIIEQSEGDARYCINMLQGIAEGYGKVTLDNVKELVRRKDRELDPFETLRDVFWAKYYWQAKNAVTNSQVDYELLMRWFDENIPLQYTSMEDVWRAYEALSRASVFLTRAKQVGWDLLSYVFDLMGPGIAFASLEKKKPGYKARWVKYQFPQYIQALARTKEKRDSIETLLKKIGEKTHTSKRKVLNDTLPFLASYYTRHAEAVENYLQLTEGEKEILNVFTQASKPTSEEKAEKSKKYYPKRSSSRKT.

ATP is bound at residue 48–55 (GPPGVGKT). The tract at residues 410–437 (TQASKPTSEEKAEKSKKYYPKRSSSRKT) is disordered. A compositionally biased stretch (basic and acidic residues) spans 416–425 (TSEEKAEKSK). Basic residues predominate over residues 426-437 (KYYPKRSSSRKT).

The protein belongs to the activator 1 small subunits family. RfcL subfamily. As to quaternary structure, heteromultimer composed of small subunits (RfcS) and large subunits (RfcL).

Part of the RFC clamp loader complex which loads the PCNA sliding clamp onto DNA. This Sulfolobus acidocaldarius (strain ATCC 33909 / DSM 639 / JCM 8929 / NBRC 15157 / NCIMB 11770) protein is Replication factor C large subunit.